The sequence spans 177 residues: Large ribosomal subunit protein uL6 (177 aa).

It belongs to the universal ribosomal protein uL6 family. As to quaternary structure, part of the 50S ribosomal subunit.

This protein binds to the 23S rRNA, and is important in its secondary structure. It is located near the subunit interface in the base of the L7/L12 stalk, and near the tRNA binding site of the peptidyltransferase center. This is Large ribosomal subunit protein uL6 from Methylobacterium sp. (strain 4-46).